Consider the following 469-residue polypeptide: Biotin synthase (469 aa).

The 228-residue stretch at 51-278 (MTVKVNYLVN…DKEIRMAGGR (228 aa)) folds into the Radical SAM core domain. Residues Cys-66, Cys-70, and Cys-73 each contribute to the [4Fe-4S] cluster site. [2Fe-2S] cluster contacts are provided by Cys-110, Cys-143, Cys-203, and Arg-273. Positions 326-469 (AGPDPSRDRH…GAGTSVAPNA (144 aa)) are disordered. 2 stretches are compositionally biased toward low complexity: residues 363–384 (GSAA…APAD) and 405–428 (AGGP…MSPA).

Belongs to the radical SAM superfamily. Biotin synthase family. In terms of assembly, homodimer. Requires [4Fe-4S] cluster as cofactor. The cofactor is [2Fe-2S] cluster.

The catalysed reaction is (4R,5S)-dethiobiotin + (sulfur carrier)-SH + 2 reduced [2Fe-2S]-[ferredoxin] + 2 S-adenosyl-L-methionine = (sulfur carrier)-H + biotin + 2 5'-deoxyadenosine + 2 L-methionine + 2 oxidized [2Fe-2S]-[ferredoxin]. It participates in cofactor biosynthesis; biotin biosynthesis; biotin from 7,8-diaminononanoate: step 2/2. Catalyzes the conversion of dethiobiotin (DTB) to biotin by the insertion of a sulfur atom into dethiobiotin via a radical-based mechanism. The sequence is that of Biotin synthase from Kocuria rhizophila (strain ATCC 9341 / DSM 348 / NBRC 103217 / DC2201).